The following is a 691-amino-acid chain: Elongation factor G (691 aa).

Positions 8-283 (KRVRNIGIAA…AVVAYLPAPD (276 aa)) constitute a tr-type G domain. GTP-binding positions include 17–24 (AHIDAGKT), 81–85 (DTPGH), and 135–138 (NKMD).

This sequence belongs to the TRAFAC class translation factor GTPase superfamily. Classic translation factor GTPase family. EF-G/EF-2 subfamily.

Its subcellular location is the cytoplasm. Catalyzes the GTP-dependent ribosomal translocation step during translation elongation. During this step, the ribosome changes from the pre-translocational (PRE) to the post-translocational (POST) state as the newly formed A-site-bound peptidyl-tRNA and P-site-bound deacylated tRNA move to the P and E sites, respectively. Catalyzes the coordinated movement of the two tRNA molecules, the mRNA and conformational changes in the ribosome. This chain is Elongation factor G, found in Campylobacter lari (strain RM2100 / D67 / ATCC BAA-1060).